The sequence spans 81 residues: Conotoxin Eb11.3 (81 aa).

Positions 1 to 23 (MMFRLTSVWCLLVIVLLNSAVDG) are cleaved as a signal peptide. 4 cysteine pairs are disulfide-bonded: Cys27/Cys41, Cys34/Cys48, Cys40/Cys56, and Cys47/Cys62. Position 69 is a leucine amide (Leu69). Residues 73 to 81 (AQYKRFFRR) constitute a propeptide that is removed on maturation.

It belongs to the conotoxin I2 superfamily. As to expression, expressed by the venom duct.

The protein localises to the secreted. This Conus eburneus (Ivory cone) protein is Conotoxin Eb11.3.